The following is a 587-amino-acid chain: Mitogen-activated protein kinase 4 (587 aa).

In terms of domain architecture, Protein kinase spans 20–312 (FVDFQPLGFG…AEMGLQHPYM (293 aa)). ATP contacts are provided by residues 26-34 (LGFGVNGLV) and Lys-49. Catalysis depends on Asp-149, which acts as the Proton acceptor. Phosphoserine; by PAK1, PAK2 and PAK3 is present on Ser-186. An SEG motif motif is present at residues 186–188 (SEG). An FRIEDE motif motif is present at residues 328–333 (FRIEDE). Basic and acidic residues-rich tracts occupy residues 373–383 (QDASEVQRDPR) and 395–413 (VDPRKDSHSSSERFLEQSH). The tract at residues 373–413 (QDASEVQRDPRAGSAPLAEDVQVDPRKDSHSSSERFLEQSH) is disordered. Ser-434 is modified (phosphoserine). The interval 499–534 (STQGGPEHASPPADDPERRLSASPPGRPAPVDGGAS) is disordered.

This sequence belongs to the protein kinase superfamily. CMGC Ser/Thr protein kinase family. MAP kinase subfamily. Homodimer. Heterodimer with ERK3/MAPK6. Interacts with (via FRIEDE motif) MAPKAPK5. Mg(2+) is required as a cofactor. Phosphorylated at Ser-186 by PAK1, PAK2 and PAK3 resulting in catalytic activation. Phosphorylated by MAPKAPK5 at other sites. High expression in heart and brain.

It localises to the cytoplasm. Its subcellular location is the nucleus. The catalysed reaction is L-seryl-[protein] + ATP = O-phospho-L-seryl-[protein] + ADP + H(+). It carries out the reaction L-threonyl-[protein] + ATP = O-phospho-L-threonyl-[protein] + ADP + H(+). With respect to regulation, activated by phosphorylation at Ser-186. Atypical MAPK protein. Phosphorylates microtubule-associated protein 2 (MAP2) and MAPKAPK5. The precise role of the complex formed with MAPKAPK5 is still unclear, but the complex follows a complex set of phosphorylation events: upon interaction with atypical MAPKAPK5, ERK4/MAPK4 is phosphorylated at Ser-186 and then mediates phosphorylation and activation of MAPKAPK5, which in turn phosphorylates ERK4/MAPK4. May promote entry in the cell cycle. The protein is Mitogen-activated protein kinase 4 (MAPK4) of Homo sapiens (Human).